A 431-amino-acid chain; its full sequence is STE20-related kinase adapter protein alpha (431 aa).

Serine 2 and serine 46 each carry phosphoserine. The Protein kinase domain occupies 69–379 (YELLTVIGKG…ASTLLNHSFF (311 aa)). The disordered stretch occupies residues 310–347 (LTMSPSRSVANSGLSDSLTTSTPRPSNGDSPSHPYHRT). The span at 312-339 (MSPSRSVANSGLSDSLTTSTPRPSNGDS) shows a compositional bias: polar residues. 2 positions are modified to phosphothreonine; by LKB1: threonine 329 and threonine 419.

The protein belongs to the protein kinase superfamily. STE Ser/Thr protein kinase family. STE20 subfamily. As to quaternary structure, component of a trimeric complex composed of STK11/LKB1, STRAD (STRADA or STRADB) and CAB39/MO25 (CAB39/MO25alpha or CAB39L/MO25beta): the complex tethers STK11/LKB1 in the cytoplasm and stimulates its catalytic activity.

The protein localises to the nucleus. It localises to the cytoplasm. Its function is as follows. Pseudokinase which, in complex with CAB39/MO25 (CAB39/MO25alpha or CAB39L/MO25beta), binds to and activates STK11/LKB1. Adopts a closed conformation typical of active protein kinases and binds STK11/LKB1 as a pseudosubstrate, promoting conformational change of STK11/LKB1 in an active conformation. This chain is STE20-related kinase adapter protein alpha (STRADA), found in Homo sapiens (Human).